The following is a 453-amino-acid chain: NADH-quinone oxidoreductase subunit D (453 aa).

Basic and acidic residues predominate over residues 1 to 21 (MKDTETRPGRHRAPEPAHPEQ). A disordered region spans residues 1 to 30 (MKDTETRPGRHRAPEPAHPEQPDTTGDTVV).

The protein belongs to the complex I 49 kDa subunit family. As to quaternary structure, NDH-1 is composed of 14 different subunits. Subunits NuoB, C, D, E, F, and G constitute the peripheral sector of the complex.

The protein resides in the cell membrane. The catalysed reaction is a quinone + NADH + 5 H(+)(in) = a quinol + NAD(+) + 4 H(+)(out). NDH-1 shuttles electrons from NADH, via FMN and iron-sulfur (Fe-S) centers, to quinones in the respiratory chain. The immediate electron acceptor for the enzyme in this species is believed to be a menaquinone. Couples the redox reaction to proton translocation (for every two electrons transferred, four hydrogen ions are translocated across the cytoplasmic membrane), and thus conserves the redox energy in a proton gradient. In Nocardia farcinica (strain IFM 10152), this protein is NADH-quinone oxidoreductase subunit D.